Here is a 578-residue protein sequence, read N- to C-terminus: Zinc finger-containing ubiquitin peptidase 1 (578 aa).

The segment at 2–24 (LSCNICGETVTSEPDMKAHLIVH) adopts a C2H2-type 1 zinc-finger fold. A C2H2-type 2; atypical zinc finger spans residues 29-52 (IICPFCKLSGVNYDEMCFHIETAH). 2 consecutive C2H2-type zinc fingers follow at residues 154–177 (PECP…KTKH) and 193–215 (YDCP…VDLH). An MIU region spans residues 226–248 (DRVQCSGDLQLAHQLQQEEDRKR). Residues 249 to 274 (RSEESRQEIEEFQKLQRQYGLDNSGG) form a zUBD/ZHA region. K262 carries the post-translational modification N6-acetyllysine. C360 acts as the Nucleophile in catalysis. H491 (proton acceptor) is an active-site residue. D512 is a catalytic residue.

The protein belongs to the peptidase C78 family. ZUFSP subfamily. As to quaternary structure, interacts with RPA1 and RPA2.

It is found in the cytoplasm. The protein resides in the nucleus. It catalyses the reaction Thiol-dependent hydrolysis of ester, thioester, amide, peptide and isopeptide bonds formed by the C-terminal Gly of ubiquitin (a 76-residue protein attached to proteins as an intracellular targeting signal).. Its function is as follows. Deubiquitinase with endodeubiquitinase activity that specifically interacts with and cleaves 'Lys-63'-linked long polyubiquitin chains. Shows only weak activity against 'Lys-11' and 'Lys-48'-linked chains. Plays an important role in genome stability pathways, functioning to prevent spontaneous DNA damage and also promote cellular survival in response to exogenous DNA damage. Modulates the ubiquitination status of replication protein A (RPA) complex proteins in response to replication stress. The sequence is that of Zinc finger-containing ubiquitin peptidase 1 from Homo sapiens (Human).